A 96-amino-acid chain; its full sequence is Cytochrome b (96 aa).

Helical transmembrane passes span 1 to 15 (LCXI…FLAM), 39 to 60 (WLIR…YLHI), and 75 to 95 (WNVG…GYVL). Residues histidine 45 and histidine 59 each coordinate heme b.

It belongs to the cytochrome b family. In terms of assembly, the cytochrome bc1 complex contains 3 respiratory subunits (MT-CYB, CYC1 and UQCRFS1), 2 core proteins (UQCRC1 and UQCRC2) and probably 6 low-molecular weight proteins. It depends on heme b as a cofactor.

It is found in the mitochondrion inner membrane. Its function is as follows. Component of the ubiquinol-cytochrome c reductase complex (complex III or cytochrome b-c1 complex) that is part of the mitochondrial respiratory chain. The b-c1 complex mediates electron transfer from ubiquinol to cytochrome c. Contributes to the generation of a proton gradient across the mitochondrial membrane that is then used for ATP synthesis. The polypeptide is Cytochrome b (mt-cyb) (Geophagus steindachneri (Red hump earth eater)).